The sequence spans 230 residues: NAD(P)H-hydrate epimerase (230 aa).

Residues 11-218 (AIDVDQELFT…ALQRKYGLNL (208 aa)) form the YjeF N-terminal domain. 61–65 (NNGGD) serves as a coordination point for (6S)-NADPHX. K(+) is bound by residues N62 and D126. (6S)-NADPHX-binding positions include 130–136 (GFSFKPP) and D159. S162 contributes to the K(+) binding site.

This sequence belongs to the NnrE/AIBP family. Requires K(+) as cofactor.

It catalyses the reaction (6R)-NADHX = (6S)-NADHX. The catalysed reaction is (6R)-NADPHX = (6S)-NADPHX. Its function is as follows. Catalyzes the epimerization of the S- and R-forms of NAD(P)HX, a damaged form of NAD(P)H that is a result of enzymatic or heat-dependent hydration. This is a prerequisite for the S-specific NAD(P)H-hydrate dehydratase to allow the repair of both epimers of NAD(P)HX. In Drosophila yakuba (Fruit fly), this protein is NAD(P)H-hydrate epimerase.